Reading from the N-terminus, the 159-residue chain is 2-C-methyl-D-erythritol 2,4-cyclodiphosphate synthase (159 aa).

Residues Asp-9 and His-11 each coordinate a divalent metal cation. Residues 9-11 and 35-36 contribute to the 4-CDP-2-C-methyl-D-erythritol 2-phosphate site; these read DVH and HS. His-43 serves as a coordination point for a divalent metal cation. Residues 57-59, 62-66, 133-136, Phe-140, and Arg-143 each bind 4-CDP-2-C-methyl-D-erythritol 2-phosphate; these read DIG, FPDTD, and TTTE.

This sequence belongs to the IspF family. In terms of assembly, homotrimer. Requires a divalent metal cation as cofactor.

It catalyses the reaction 4-CDP-2-C-methyl-D-erythritol 2-phosphate = 2-C-methyl-D-erythritol 2,4-cyclic diphosphate + CMP. The protein operates within isoprenoid biosynthesis; isopentenyl diphosphate biosynthesis via DXP pathway; isopentenyl diphosphate from 1-deoxy-D-xylulose 5-phosphate: step 4/6. In terms of biological role, involved in the biosynthesis of isopentenyl diphosphate (IPP) and dimethylallyl diphosphate (DMAPP), two major building blocks of isoprenoid compounds. Catalyzes the conversion of 4-diphosphocytidyl-2-C-methyl-D-erythritol 2-phosphate (CDP-ME2P) to 2-C-methyl-D-erythritol 2,4-cyclodiphosphate (ME-CPP) with a corresponding release of cytidine 5-monophosphate (CMP). This is 2-C-methyl-D-erythritol 2,4-cyclodiphosphate synthase from Mannheimia succiniciproducens (strain KCTC 0769BP / MBEL55E).